Reading from the N-terminus, the 135-residue chain is ATP synthase epsilon chain (135 aa).

The protein belongs to the ATPase epsilon chain family. As to quaternary structure, F-type ATPases have 2 components, CF(1) - the catalytic core - and CF(0) - the membrane proton channel. CF(1) has five subunits: alpha(3), beta(3), gamma(1), delta(1), epsilon(1). CF(0) has three main subunits: a, b and c.

The protein localises to the cell inner membrane. Its function is as follows. Produces ATP from ADP in the presence of a proton gradient across the membrane. This chain is ATP synthase epsilon chain, found in Desulforapulum autotrophicum (strain ATCC 43914 / DSM 3382 / VKM B-1955 / HRM2) (Desulfobacterium autotrophicum).